The sequence spans 87 residues: Homeotic protein ultrabithorax (87 aa).

Positions 22–27 match the Antp-type hexapeptide motif; the sequence is FYPWMA.

The protein belongs to the Antp homeobox family. In terms of tissue distribution, in the embryo, expression is seen in the epidermis, somatic and visceral mesoderm, and the peripheral and central nervous system.

The protein localises to the nucleus. Functionally, sequence-specific transcription factor which is part of a developmental regulatory system that provides cells with specific positional identities on the anterior-posterior axis. Binds the consensus region 5'-TTAAT[GT][GA]-3'. This homeotic protein controls development of the cells in the posterior thoracic and first abdominal segments. It activates the synthesis of the decapentaplegic (DPP) growth factor. The chain is Homeotic protein ultrabithorax (Ubx) from Drosophila virilis (Fruit fly).